The sequence spans 127 residues: Small ribosomal subunit protein uS12m (127 aa).

Belongs to the universal ribosomal protein uS12 family.

It localises to the mitochondrion. Protein S12 is involved in the translation initiation step. The chain is Small ribosomal subunit protein uS12m (RPS12) from Chondrus crispus (Carrageen Irish moss).